Here is a 232-residue protein sequence, read N- to C-terminus: Large ribosomal subunit protein uL1 (232 aa).

It belongs to the universal ribosomal protein uL1 family. As to quaternary structure, part of the 50S ribosomal subunit.

Its function is as follows. Binds directly to 23S rRNA. The L1 stalk is quite mobile in the ribosome, and is involved in E site tRNA release. Protein L1 is also a translational repressor protein, it controls the translation of the L11 operon by binding to its mRNA. This chain is Large ribosomal subunit protein uL1, found in Xylella fastidiosa (strain M12).